Consider the following 249-residue polypeptide: Aquaporin (249 aa).

At 1–11 (MTRKWIKKLQS) the chain is on the cytoplasmic side. The helical transmembrane segment at 12 to 32 (YIGEFFASFIFGFAVYTSIIG) threads the bilayer. Residues 33-39 (SAQTGQS) are Extracellular-facing. The chain crosses the membrane as a helical span at residues 40–60 (AGPIIVALTIALSGVAIIYSF). At 61-83 (CDITVAHFNPAITFSAMCFRRLP) the chain is on the cytoplasmic side. The NPA signature appears at 69–71 (NPA). Residues 84–104 (FFGGIFIIIFQVAGFIIAGLA) form a helical membrane-spanning segment. Over 105 to 133 (SVAVLPGKYKNKLEIARPKRVADNVSRGR) the chain is Extracellular. A helical membrane pass occupies residues 134–154 (IFGTEFFLTAILVYVAFAVGV). The Cytoplasmic segment spans residues 155–179 (NPYTPPKDEHGDQLDPDEGLTEGRK). A helical transmembrane segment spans residues 180–200 (ITAPLAIGFTLGFCALLGIAS). Over 201–223 (SGGAFNPGIVLSPMILTGTWDFW) the chain is Extracellular. The short motif at 206-208 (NPG) is the NPG element. A helical membrane pass occupies residues 224–246 (WVYLLGQFSGGLLGGGLQRFLLY). At 247 to 249 (KIF) the chain is on the cytoplasmic side.

It belongs to the MIP/aquaporin (TC 1.A.8) family.

It localises to the cell membrane. Its function is as follows. Water channel required to facilitate the transport of water across membranes. Involved in osmotolerance. In Vairimorpha ceranae (strain BRL01) (Microsporidian parasite), this protein is Aquaporin (AQP).